A 65-amino-acid polypeptide reads, in one-letter code: Large ribosomal subunit protein bL35 (65 aa).

Residues 23-44 (KRMKAGKQHILTKKSQKTKRNL) are disordered.

It belongs to the bacterial ribosomal protein bL35 family.

This chain is Large ribosomal subunit protein bL35, found in Lachnoclostridium phytofermentans (strain ATCC 700394 / DSM 18823 / ISDg) (Clostridium phytofermentans).